The following is a 184-amino-acid chain: UPF0398 protein BCG9842_B3730 (184 aa).

The protein belongs to the UPF0398 family.

The protein is UPF0398 protein BCG9842_B3730 of Bacillus cereus (strain G9842).